The primary structure comprises 588 residues: Cation channel sperm-associated protein 2 (588 aa).

Residues 1–106 (MAQEQGHFQL…LWAGWVLDSS (106 aa)) are Cytoplasmic-facing. The chain crosses the membrane as a helical span at residues 107-129 (VFSKFIISLIFLNTFVLMVEIEL). Residues 130 to 138 (MESTNTALW) lie on the Extracellular side of the membrane. A helical transmembrane segment spans residues 139–164 (PVKLALEVADWFILLSFIVEILLMWL). Over 165 to 173 (ASFSLFWKD) the chain is Cytoplasmic. A helical transmembrane segment spans residues 174-198 (AWNVFDFFVTLLSLLPELVVLLGVP). The Extracellular segment spans residues 199-201 (AHS). The helical transmembrane segment at 202 to 220 (VWLQLLRVCRVLRSLKLFA) threads the bilayer. Over 221-237 (RFRQIKVILLALVRALK) the chain is Cytoplasmic. A helical transmembrane segment spans residues 238–260 (SMTFLLMLLLIFFYIFAVTGVYF). Residues 261-279 (FREYSRSTIEGLEYNMFFS) are Extracellular-facing. The segment at residues 280-292 (DLLNSLVTVFILF) is an intramembrane region (helical; Pore-forming). Residues 293-312 (TLDHWYAVLQDIWKVPESSR) are Extracellular-facing. Residues 313–339 (VFSSIYVILWLLLGSIIFRNIIVAMMV) traverse the membrane as a helical segment. Topologically, residues 340–588 (TNFQNIRSEL…VQALMSFEDK (249 aa)) are cytoplasmic. Residues 376–512 (SESLRGTSLG…YPVSHSISSH (137 aa)) are disordered. Residues 390 to 439 (DIIETSDASDDDDDDDDDDDDDDDDDDDKSDATESDNEESDSENSESENS) are compositionally biased toward acidic residues. Residues 440–502 (ESEKIDPEKD…KVKEESKEKA (63 aa)) are compositionally biased toward basic and acidic residues.

Belongs to the cation channel sperm-associated (TC 1.A.1.19) family. As to quaternary structure, component of the CatSper complex or CatSpermasome composed of the core pore-forming members CATSPER1, CATSPER2, CATSPER3 and CATSPER4 as well as auxiliary members CATSPERB, CATSPERG2, CATSPERD, CATSPERE, CATSPERZ, C2CD6/CATSPERT, SLCO6C1, TMEM249, TMEM262 and EFCAB9. HSPA1 may be an additional auxiliary complex member. The core complex members CATSPER1, CATSPER2, CATSPER3 and CATSPER4 form a heterotetrameric channel. The auxiliary CATSPERB, CATSPERG2, CATSPERD and CATSPERE subunits form a pavilion-like structure over the pore which stabilizes the complex through interactions with CATSPER4, CATSPER3, CATSPER1 and CATSPER2 respectively. SLCO6C1 interacts with CATSPERE and TMEM262/CATSPERH interacts with CATSPERB, further stabilizing the complex. C2CD6/CATSPERT interacts at least with CATSPERD and is required for targeting the CatSper complex in the flagellar membrane. Interacts with Ca(v)3.3/CACNA1I, leading to suppression of T-type calcium channel activity. As to expression, testis-specific.

Its subcellular location is the cell projection. The protein localises to the cilium. It is found in the flagellum membrane. It catalyses the reaction Ca(2+)(in) = Ca(2+)(out). In contrast to the human ortholog, not activated by progesterone. Activated by intracellular alkalinization. Functionally, pore-forming subunit of the CatSper complex, a sperm-specific voltage-gated calcium channel that plays a central role in sperm cell hyperactivation. Controls calcium entry to mediate the hyperactivated motility, a step needed for sperm motility which is essential late in the preparation of sperm for fertilization. The polypeptide is Cation channel sperm-associated protein 2 (Catsper2) (Mus musculus (Mouse)).